A 3515-amino-acid polypeptide reads, in one-letter code: Microtubule-actin cross-linking factor 1, isoforms 6/7 (3515 aa).

Disordered stretches follow at residues 1–23 (MGKP…KGEE), 108–136 (VQKS…WKSF), 155–196 (VSEA…TLEH), 965–1178 (TEED…AVPT), 1217–1298 (SPAA…SPAA), 1710–1730 (EELA…QFQQ), and 3078–3108 (PTHA…ILSQ). The span at 120–129 (PNAERKDNVN) shows a compositional bias: basic and acidic residues. The 13 X 13 AA approximate tandem repeat of P-T-S-P-A-A-A-V-P-T-P-E-E stretch occupies residues 157–245 (EAGASNPSLQ…ESEAVATSGN (89 aa)). Composition is skewed to low complexity over residues 995-1031 (STPE…SPAA) and 1040-1139 (TSPA…AVPT). Repeat copies occupy residues 1012 to 1024 (EPTS…PTPE), 1026 to 1037 (PTSPAAAVPPPE), 1038 to 1051 (EPTS…TPEE), 1052 to 1064 (PTSP…TPEE), 1065 to 1077 (PTSP…TPEE), 1078 to 1090 (PTSP…TPEE), 1091 to 1103 (PTSP…TPEE), 1104 to 1116 (PTSP…TPEE), 1117 to 1129 (PASP…TPEE), 1130 to 1142 (PASP…TPEE), 1143 to 1155 (PAFP…TPEE), 1156 to 1168 (SASA…TPEE), and 1169 to 1178 (SASPAAAVPT). The span at 1140–1151 (PEEPAFPAPAVP) shows a compositional bias: pro residues. Composition is skewed to low complexity over residues 1162–1178 (AVPT…AVPT) and 1268–1298 (SSPA…SPAA). The span at 1715-1730 (SGGQSPTGEQIPQFQQ) shows a compositional bias: polar residues. EF-hand domains lie at 3168 to 3203 (HKKS…SKFP) and 3204 to 3239 (TTKL…NKDA). Residues Asp3181, Asp3183, Asp3185, Lys3187, Glu3192, Asp3217, Asp3219, Asp3221, Tyr3223, and Glu3228 each coordinate Ca(2+). The 73-residue stretch at 3244 to 3316 (TDADKIEDEV…EFLVKNDPCR (73 aa)) folds into the GAR domain. The interval 3332–3515 (PEGASQGMTP…ASPRTPGPKR (184 aa)) is disordered. Residues 3352-3386 (SSRAASPTRSSSSASQSNHSCTSMPSSPATPASGT) are compositionally biased toward low complexity. Polar residues predominate over residues 3402-3426 (TFHSSRTSLAGDTSNSSSPASTGAK). Residues 3437 to 3451 (SRPGSRAGSRAGSRA) are compositionally biased toward low complexity. The span at 3466 to 3488 (ETQSACSDTSESSAAGGQGNSRR) shows a compositional bias: polar residues.

The protein localises to the cytoplasm. It is found in the cytoskeleton. The protein is Microtubule-actin cross-linking factor 1, isoforms 6/7 of Homo sapiens (Human).